Reading from the N-terminus, the 191-residue chain is Probable molybdenum cofactor guanylyltransferase (191 aa).

Residues 6–8 (LAG), Lys-18, Asp-67, and Asp-92 contribute to the GTP site. Mg(2+) is bound at residue Asp-92.

It belongs to the MobA family. Requires Mg(2+) as cofactor.

It localises to the cytoplasm. The enzyme catalyses Mo-molybdopterin + GTP + H(+) = Mo-molybdopterin guanine dinucleotide + diphosphate. Its function is as follows. Transfers a GMP moiety from GTP to Mo-molybdopterin (Mo-MPT) cofactor (Moco or molybdenum cofactor) to form Mo-molybdopterin guanine dinucleotide (Mo-MGD) cofactor. The chain is Probable molybdenum cofactor guanylyltransferase from Thermococcus gammatolerans (strain DSM 15229 / JCM 11827 / EJ3).